Here is a 196-residue protein sequence, read N- to C-terminus: Shikimate kinase (196 aa).

An ATP-binding site is contributed by 32 to 37 (GAGKSA). S36 contributes to the Mg(2+) binding site. The substrate site is built by D54, R78, and G100. R138 lines the ATP pocket. R157 is a substrate binding site. Residue R174 participates in ATP binding.

The protein belongs to the shikimate kinase family. In terms of assembly, monomer. The cofactor is Mg(2+).

It localises to the cytoplasm. The catalysed reaction is shikimate + ATP = 3-phosphoshikimate + ADP + H(+). It functions in the pathway metabolic intermediate biosynthesis; chorismate biosynthesis; chorismate from D-erythrose 4-phosphate and phosphoenolpyruvate: step 5/7. In terms of biological role, catalyzes the specific phosphorylation of the 3-hydroxyl group of shikimic acid using ATP as a cosubstrate. In Rhizobium leguminosarum bv. trifolii (strain WSM2304), this protein is Shikimate kinase.